Reading from the N-terminus, the 602-residue chain is MTISINEYSDLNNLAFGLGQDVSQDLKELVKVASIFMPDSKIHKWLIDTRLEEVVTDLNLRYELKSVITNTPISVTWKQLTGTRTKREANSLVQAVFPGQCSRLAIVDWAAKNYVSVAVAFGLLKFHRADKTFTISEIGIQAVKLYDSEELAELDKFLYERLLEYPYAAWLIRLLGNQPSKQFSKFDLGEHFGFIDELGFETAPIEIFLNGLAQAEIDGDKTAAQKIKSNFESTSDKYMRWLAGVLVTAGLATSTTKKVTHTYKNRKFELTLGTVYQITAKGLTALKEVNGKSRYPRSRKRVMWEFLATKDKEAIAKKTSRSLMLKHLTEKKNPIQAEVIATLINTDYPTLEITPEEVIDDCIGLNRIGIEILIDGDKLTLNDKLFDFEIPVQKDVVLEKSDIEKFKNQLRTELTNIDHSYLKGIDIASKKKTSNVENTEFEAISTKIFTDELGFSGKHLGGSNKPDGLLWDDDCAIILDSKAYSEGFPLTASHTDAMGRYLRQFTERKEEIKPTWWDIAPEHLDNTYFAYVSGSFSGNYKEQLQKFRQDTNHLGGALEFVKLLLLANNYKTQKMSKKEVKKSILDYNISYEEYAPLLAEIE.

The enzyme catalyses Endonucleolytic cleavage of DNA to give specific double-stranded fragments with terminal 5'-phosphates.. Its function is as follows. An S subtype restriction enzyme that recognizes the double-stranded sequences 5'-GGATG-3' and 3'-CATCC-5' and cleaves respectively 15 bases after G-1 and 14 bases before C-1. In Streptococcus sanguinis, this protein is Type II restriction enzyme StsI (stsIR).